The sequence spans 168 residues: Phosphopantetheine adenylyltransferase (168 aa).

Substrate is bound at residue threonine 14. Residues 14-15 and histidine 22 contribute to the ATP site; that span reads TF. Residues lysine 46, leucine 78, and arginine 92 each contribute to the substrate site. ATP contacts are provided by residues 93-95, glutamate 103, and 128-134; these read GLR and YSFISSS.

This sequence belongs to the bacterial CoaD family. As to quaternary structure, homohexamer. Requires Mg(2+) as cofactor.

It is found in the cytoplasm. It carries out the reaction (R)-4'-phosphopantetheine + ATP + H(+) = 3'-dephospho-CoA + diphosphate. The protein operates within cofactor biosynthesis; coenzyme A biosynthesis; CoA from (R)-pantothenate: step 4/5. Functionally, reversibly transfers an adenylyl group from ATP to 4'-phosphopantetheine, yielding dephospho-CoA (dPCoA) and pyrophosphate. This is Phosphopantetheine adenylyltransferase from Xanthomonas campestris pv. campestris (strain 8004).